A 38-amino-acid polypeptide reads, in one-letter code: Large ribosomal subunit protein bL36 (38 aa).

This sequence belongs to the bacterial ribosomal protein bL36 family.

The sequence is that of Large ribosomal subunit protein bL36 from Karelsulcia muelleri (strain GWSS) (Sulcia muelleri).